The following is a 302-amino-acid chain: Urease accessory protein UreD (302 aa).

It belongs to the UreD family. As to quaternary structure, ureD, UreF and UreG form a complex that acts as a GTP-hydrolysis-dependent molecular chaperone, activating the urease apoprotein by helping to assemble the nickel containing metallocenter of UreC. The UreE protein probably delivers the nickel.

It localises to the cytoplasm. In terms of biological role, required for maturation of urease via the functional incorporation of the urease nickel metallocenter. This is Urease accessory protein UreD from Pseudoalteromonas translucida (strain TAC 125).